The primary structure comprises 272 residues: ATP phosphoribosyltransferase regulatory subunit (272 aa).

The protein belongs to the class-II aminoacyl-tRNA synthetase family. HisZ subfamily. Heteromultimer composed of HisG and HisZ subunits.

The protein localises to the cytoplasm. Its pathway is amino-acid biosynthesis; L-histidine biosynthesis; L-histidine from 5-phospho-alpha-D-ribose 1-diphosphate: step 1/9. Required for the first step of histidine biosynthesis. May allow the feedback regulation of ATP phosphoribosyltransferase activity by histidine. This Staphylococcus aureus (strain MRSA252) protein is ATP phosphoribosyltransferase regulatory subunit.